The sequence spans 124 residues: Chorion class high-cysteine HCA protein 12 (124 aa).

Positions 1–21 are cleaved as a signal peptide; the sequence is MFTFALLLLCVQGCLIQNVYG. The left arm stretch occupies residues 22 to 35; it reads QCCGCGCGGGCGCG. A central domain region spans residues 36 to 83; it reads CYGGEGDGNVNVCGELPVCGETLVCGRVPICGGVCFKGPACASGCVSI. Residues 84–124 are right arm (Gly- and Cys-rich tandem repeats); the sequence is CGRCCGCGCGGCGGCGCGCGGCGCGCGGCGGCGCGRRCCCC.

Belongs to the chorion protein family.

This protein is one of many from the eggshell of the silk moth. The sequence is that of Chorion class high-cysteine HCA protein 12 from Bombyx mori (Silk moth).